Here is an 857-residue protein sequence, read N- to C-terminus: Autoinducer 2 sensor kinase/phosphatase LuxQ (857 aa).

Helical transmembrane passes span 20-40 (IIFL…YYFS) and 283-303 (LGLA…RSWI). Residues 490-712 (KMSHEIRTPL…TFYLSIPVEK (223 aa)) form the Histidine kinase domain. Residue histidine 493 is modified to Phosphohistidine; by autocatalysis. The region spanning 735–850 (KVLLVEDNHT…ELHDELLHFK (116 aa)) is the Response regulatory domain. Aspartate 784 carries the 4-aspartylphosphate modification.

As to quaternary structure, binds the complex formed by the autoinducer and LuxP.

It localises to the cell inner membrane. It catalyses the reaction ATP + protein L-histidine = ADP + protein N-phospho-L-histidine.. Its function is as follows. At low cell density, in absence of autoinducer has a kinase activity, and autophosphorylates on a histidine residue. The phosphoryl group is then transferred to an aspartate residue in the response regulator domain. The phosphoryl group is transferred to LuxU, and ultimately to LuxO. At high cell density, in the presence of autoinducer, the kinase activity is inactivated, and the response regulator domain has a phosphatase activity. The polypeptide is Autoinducer 2 sensor kinase/phosphatase LuxQ (luxQ) (Vibrio vulnificus (strain YJ016)).